The following is a 200-amino-acid chain: Large ribosomal subunit protein bL25 (200 aa).

This sequence belongs to the bacterial ribosomal protein bL25 family. CTC subfamily. Part of the 50S ribosomal subunit; part of the 5S rRNA/L5/L18/L25 subcomplex. Contacts the 5S rRNA. Binds to the 5S rRNA independently of L5 and L18.

Functionally, this is one of the proteins that binds to the 5S RNA in the ribosome where it forms part of the central protuberance. This chain is Large ribosomal subunit protein bL25, found in Caldicellulosiruptor bescii (strain ATCC BAA-1888 / DSM 6725 / KCTC 15123 / Z-1320) (Anaerocellum thermophilum).